The sequence spans 474 residues: Probable cytosol aminopeptidase (474 aa).

The Mn(2+) site is built by Lys237 and Asp242. Lys249 is an active-site residue. Asp260, Asp319, and Glu321 together coordinate Mn(2+). Arg323 is an active-site residue.

This sequence belongs to the peptidase M17 family. Mn(2+) is required as a cofactor.

It is found in the cytoplasm. It carries out the reaction Release of an N-terminal amino acid, Xaa-|-Yaa-, in which Xaa is preferably Leu, but may be other amino acids including Pro although not Arg or Lys, and Yaa may be Pro. Amino acid amides and methyl esters are also readily hydrolyzed, but rates on arylamides are exceedingly low.. The enzyme catalyses Release of an N-terminal amino acid, preferentially leucine, but not glutamic or aspartic acids.. Functionally, presumably involved in the processing and regular turnover of intracellular proteins. Catalyzes the removal of unsubstituted N-terminal amino acids from various peptides. This Helicobacter hepaticus (strain ATCC 51449 / 3B1) protein is Probable cytosol aminopeptidase.